A 279-amino-acid polypeptide reads, in one-letter code: Putative potassium channel regulatory protein (279 aa).

The BTB domain maps to 5–74 (ELVTLNVGGM…VRTSQLSLPS (70 aa)). Residues 256 to 279 (ENSRQENYETETVQVKQAKPNKKR) form a disordered region.

Its subcellular location is the endoplasmic reticulum. Inhibits potassium fluxes in cells, possibly by retaining potassium channels in the cytoplasm. The chain is Putative potassium channel regulatory protein (kcnrg) from Xenopus tropicalis (Western clawed frog).